Consider the following 271-residue polypeptide: 3-methyl-2-oxobutanoate hydroxymethyltransferase (271 aa).

Mg(2+) is bound by residues Asp-53 and Asp-92. 3-methyl-2-oxobutanoate-binding positions include 53-54, Asp-92, and Lys-120; that span reads DS. Glu-122 is a binding site for Mg(2+). The active-site Proton acceptor is the Glu-189.

It belongs to the PanB family. Homodecamer; pentamer of dimers. Mg(2+) serves as cofactor.

The protein localises to the cytoplasm. The enzyme catalyses 3-methyl-2-oxobutanoate + (6R)-5,10-methylene-5,6,7,8-tetrahydrofolate + H2O = 2-dehydropantoate + (6S)-5,6,7,8-tetrahydrofolate. Its pathway is cofactor biosynthesis; (R)-pantothenate biosynthesis; (R)-pantoate from 3-methyl-2-oxobutanoate: step 1/2. Functionally, catalyzes the reversible reaction in which hydroxymethyl group from 5,10-methylenetetrahydrofolate is transferred onto alpha-ketoisovalerate to form ketopantoate. The sequence is that of 3-methyl-2-oxobutanoate hydroxymethyltransferase from Burkholderia vietnamiensis (strain G4 / LMG 22486) (Burkholderia cepacia (strain R1808)).